The following is a 287-amino-acid chain: ATP synthase gamma chain (287 aa).

Belongs to the ATPase gamma chain family. In terms of assembly, F-type ATPases have 2 components, CF(1) - the catalytic core - and CF(0) - the membrane proton channel. CF(1) has five subunits: alpha(3), beta(3), gamma(1), delta(1), epsilon(1). CF(0) has three main subunits: a, b and c.

The protein resides in the cell inner membrane. Produces ATP from ADP in the presence of a proton gradient across the membrane. The gamma chain is believed to be important in regulating ATPase activity and the flow of protons through the CF(0) complex. This chain is ATP synthase gamma chain, found in Stenotrophomonas maltophilia (strain R551-3).